The primary structure comprises 310 residues: Peroxidase 44 (310 aa).

Residues 1-20 (MRSITALFFLFCFLAPSALA) form the signal peptide. Disulfide bonds link C31-C110, C64-C69, C116-C305, and C194-C218. H62 functions as the Proton acceptor in the catalytic mechanism. Ca(2+) is bound by residues D63, V66, G68, D70, and S72. P156 provides a ligand contact to substrate. A heme b-binding site is contributed by H187. Residue S188 coordinates Ca(2+). 3 residues coordinate Ca(2+): D229, T232, and D237.

This sequence belongs to the peroxidase family. Classical plant (class III) peroxidase subfamily. The cofactor is heme b. Ca(2+) serves as cofactor.

The protein resides in the secreted. It catalyses the reaction 2 a phenolic donor + H2O2 = 2 a phenolic radical donor + 2 H2O. In terms of biological role, removal of H(2)O(2), oxidation of toxic reductants, biosynthesis and degradation of lignin, suberization, auxin catabolism, response to environmental stresses such as wounding, pathogen attack and oxidative stress. These functions might be dependent on each isozyme/isoform in each plant tissue. The sequence is that of Peroxidase 44 (PER44) from Arabidopsis thaliana (Mouse-ear cress).